Here is a 220-residue protein sequence, read N- to C-terminus: Chaperone protein TorD (220 aa).

This sequence belongs to the TorD/DmsD family. TorD subfamily.

Its subcellular location is the cytoplasm. Functionally, involved in the biogenesis of TorA. Acts on TorA before the insertion of the molybdenum cofactor and, as a result, probably favors a conformation of the apoenzyme that is competent for acquiring the cofactor. This chain is Chaperone protein TorD, found in Vibrio cholerae serotype O1 (strain ATCC 39315 / El Tor Inaba N16961).